Reading from the N-terminus, the 530-residue chain is MSHGQPPPGSSMYGFGAMGMGSGMGSGMGSGMGTGMGTGMGTGMSASQMTSDPQDMMSLLDTSVFPGFDGMSMSLDVGDSMSNPFTPVSVPPPLPAGNAGPSHVGVCGGHGAPDQLFSPDDLIATSMSSAGPMIATPTTTTSGPSGGPSSGGGSTLTEFTKRRNWPAKVVEELQDWEHILDANGRIKHVSPSVEPLTGYKPPEIIDLFLRDLIHPDDVGVFTAELNEAIATGSQLRLFYRFRKKDGNWTIFETVGHAHIAAAKFAPNPQNQSPFCQAVFMMARPYPTKNAGLLDSFLEHKIENERLKRRIAELRREEQEEQEESHRTWRMSQEGRSDVTPSDDTATQMGMTPFYIPMNAQADVMMPPPSQPASSLNIALTRENLEGIAGSRPDSIREKMLRYEGNHADTIEMLTGLKYQEGERSHGITTGNASPTLIKGDAGIAIPLDRDPRTGEKKKKIKVAEEYVCTDCGTLDSPEWRKGPSGPKTLCNACGLRWAKKEKKKNANNNNNGGGIGGHNDIHTPMGDHMG.

A run of 7 repeats spans residues 9–12 (GSSM), 21–24 (GSGM), 25–28 (GSGM), 29–32 (GSGM), 33–36 (GTGM), 37–40 (GTGM), and 41–44 (GTGM). The segment at 9 to 44 (GSSMYGFGAMGMGSGMGSGMGSGMGTGMGTGMGTGM) is 7 X 4 AA repeats of G-[SAT]-G-M. Residues 134 to 158 (IATPTTTTSGPSGGPSSGGGSTLTE) are disordered. Gly residues predominate over residues 144–154 (PSGGPSSGGGS). Residues 162-232 (RRNWPAKVVE…AELNEAIATG (71 aa)) enclose the PAS domain. The segment at 315–343 (REEQEEQEESHRTWRMSQEGRSDVTPSDD) is disordered. The GATA-type zinc finger occupies 468–493 (CTDCGTLDSPEWRKGPSGPKTLCNAC). The tract at residues 504–530 (KNANNNNNGGGIGGHNDIHTPMGDHMG) is disordered.

In terms of assembly, heterodimer of wc-1 and wc-2 (Potential). Binds to DNA.

The protein resides in the nucleus. Functionally, may function as a transcription factor involved in light regulation. Binds and affects blue light regulation of the al-3 gene. Wc-1 and wc-2 interact via homologous PAS domains, bind to promoters of light regulated genes such as frq, and activate transcription. May bind directly to frq. In Neurospora crassa (strain ATCC 24698 / 74-OR23-1A / CBS 708.71 / DSM 1257 / FGSC 987), this protein is White collar 2 protein (wc-2).